A 386-amino-acid polypeptide reads, in one-letter code: Acetate kinase (386 aa).

Asn7 provides a ligand contact to Mg(2+). Lys14 contributes to the ATP binding site. Arg78 contacts substrate. Asp135 acts as the Proton donor/acceptor in catalysis. ATP contacts are provided by residues 195–199 (HLGNG), 268–270 (DMR), and 316–320 (GIGEN). Glu370 is a Mg(2+) binding site.

The protein belongs to the acetokinase family. Homodimer. Requires Mg(2+) as cofactor. The cofactor is Mn(2+).

The protein resides in the cytoplasm. The catalysed reaction is acetate + ATP = acetyl phosphate + ADP. It functions in the pathway metabolic intermediate biosynthesis; acetyl-CoA biosynthesis; acetyl-CoA from acetate: step 1/2. Its function is as follows. Catalyzes the formation of acetyl phosphate from acetate and ATP. Can also catalyze the reverse reaction. The chain is Acetate kinase from Arthrobacter sp. (strain FB24).